The chain runs to 699 residues: Cysteine--tRNA ligase (699 aa).

Residues 1–226 (MTTITEKRLT…SEQQRLIHNP (226 aa)) form a unknown region. Position 254 (C254) interacts with Zn(2+). The 'HIGH' region signature appears at 256–266 (MTVYDYCHLGH). The Zn(2+) site is built by C435, H460, and E464. The 'KMSKS' region signature appears at 508-512 (KMSKS). Position 511 (K511) interacts with ATP.

This sequence belongs to the class-I aminoacyl-tRNA synthetase family. As to quaternary structure, monomer. The cofactor is Zn(2+).

The protein resides in the cytoplasm. It carries out the reaction tRNA(Cys) + L-cysteine + ATP = L-cysteinyl-tRNA(Cys) + AMP + diphosphate. The chain is Cysteine--tRNA ligase (cysS) from Neisseria meningitidis serogroup A / serotype 4A (strain DSM 15465 / Z2491).